The following is a 222-amino-acid chain: Sigma non-opioid intracellular receptor 1 (222 aa).

The Lumenal segment spans residues 1–6; it reads MSLIRT. Residues 7-29 traverse the membrane as a helical segment; it reads ILKLVVVVGFLSLTVQFIRHWMA. Over 30–222 the chain is Cytoplasmic; sequence NKQYVFTKEE…STFLTESGVL (193 aa). The important for ligand-binding stretch occupies residues 97-104; the sequence is SLTEYVLL. The interval 175–222 is C-terminal hydrophobic region; that stretch reads FIPSTLGFALADTMFSTQDFLTLFYTARVYVKGMILEASTFLTESGVL.

The protein belongs to the ERG2 family. Homotrimer.

Its subcellular location is the nucleus inner membrane. The protein localises to the nucleus outer membrane. The protein resides in the nucleus envelope. It is found in the cytoplasmic vesicle. It localises to the endoplasmic reticulum membrane. Its subcellular location is the membrane. May function in lipid transport from the endoplasmic reticulum and be involved in a wide array of cellular functions probably through regulation of the biogenesis of lipid microdomains at the plasma membrane. May regulate calcium efflux at the endoplasmic reticulum. In Danio rerio (Zebrafish), this protein is Sigma non-opioid intracellular receptor 1 (sigmar1).